Reading from the N-terminus, the 215-residue chain is MSKVYDWFEERLEIQAIADDITSKYVPPHVNIFYCLGGITLTCFLVQVATGFAMTFYYRPTVTEAFASVQYIMTEANFGWLIRSVHRWSASMMVLMMILHVFRVYLTGGFKKPRELTWVTGVVLGVLTATFGVTGYSLPWDQIGYWAVKFVTGVPDAIPVIGSSXVELLPASASVGQSTLTRFYSLHTFVLPLLTAVFMLMHFLMIRKQGIFGPL.

Residues 32-52 traverse the membrane as a helical segment; sequence IFYCLGGITLTCFLVQVATGF. Cys-35 is a binding site for heme c. Residues His-86 and His-100 each contribute to the heme b site. 3 consecutive transmembrane segments (helical) span residues 90–110, 116–136, and 186–206; these read ASMMVLMMILHVFRVYLTGGF, LTWVTGVVLGVLTATFGVTGY, and LHTFVLPLLTAVFMLMHFLMI. Heme b contacts are provided by His-187 and His-202.

This sequence belongs to the cytochrome b family. PetB subfamily. As to quaternary structure, the 4 large subunits of the cytochrome b6-f complex are cytochrome b6, subunit IV (17 kDa polypeptide, PetD), cytochrome f and the Rieske protein, while the 4 small subunits are PetG, PetL, PetM and PetN. The complex functions as a dimer. Heme b is required as a cofactor. The cofactor is heme c.

It is found in the plastid. The protein resides in the chloroplast thylakoid membrane. Functionally, component of the cytochrome b6-f complex, which mediates electron transfer between photosystem II (PSII) and photosystem I (PSI), cyclic electron flow around PSI, and state transitions. The sequence is that of Cytochrome b6 from Pisum sativum (Garden pea).